The primary structure comprises 151 residues: SsrA-binding protein (151 aa).

This sequence belongs to the SmpB family.

The protein resides in the cytoplasm. Functionally, required for rescue of stalled ribosomes mediated by trans-translation. Binds to transfer-messenger RNA (tmRNA), required for stable association of tmRNA with ribosomes. tmRNA and SmpB together mimic tRNA shape, replacing the anticodon stem-loop with SmpB. tmRNA is encoded by the ssrA gene; the 2 termini fold to resemble tRNA(Ala) and it encodes a 'tag peptide', a short internal open reading frame. During trans-translation Ala-aminoacylated tmRNA acts like a tRNA, entering the A-site of stalled ribosomes, displacing the stalled mRNA. The ribosome then switches to translate the ORF on the tmRNA; the nascent peptide is terminated with the 'tag peptide' encoded by the tmRNA and targeted for degradation. The ribosome is freed to recommence translation, which seems to be the essential function of trans-translation. In Chlamydia pneumoniae (Chlamydophila pneumoniae), this protein is SsrA-binding protein.